The sequence spans 237 residues: Phosphoribosylaminoimidazole-succinocarboxamide synthase (237 aa).

It belongs to the SAICAR synthetase family.

The catalysed reaction is 5-amino-1-(5-phospho-D-ribosyl)imidazole-4-carboxylate + L-aspartate + ATP = (2S)-2-[5-amino-1-(5-phospho-beta-D-ribosyl)imidazole-4-carboxamido]succinate + ADP + phosphate + 2 H(+). It functions in the pathway purine metabolism; IMP biosynthesis via de novo pathway; 5-amino-1-(5-phospho-D-ribosyl)imidazole-4-carboxamide from 5-amino-1-(5-phospho-D-ribosyl)imidazole-4-carboxylate: step 1/2. The polypeptide is Phosphoribosylaminoimidazole-succinocarboxamide synthase (Alteromonas mediterranea (strain DSM 17117 / CIP 110805 / LMG 28347 / Deep ecotype)).